Reading from the N-terminus, the 353-residue chain is Protein MGF 360-11L (353 aa).

Belongs to the asfivirus MGF 360 family. As to quaternary structure, interacts with host TBK1 ad IRF7.

Plays a role in virus cell tropism, and may be required for efficient virus replication in macrophages. In addition, inhibits the phosphorylation of host TBK1 and IRF7 and thereby negatively regulates the host cGAS signaling pathway and antagonizes IFN-mediated antiviral activity. The chain is Protein MGF 360-11L from Ornithodoros (relapsing fever ticks).